The chain runs to 107 residues: Putative pterin-4-alpha-carbinolamine dehydratase (107 aa).

The protein belongs to the pterin-4-alpha-carbinolamine dehydratase family.

It carries out the reaction (4aS,6R)-4a-hydroxy-L-erythro-5,6,7,8-tetrahydrobiopterin = (6R)-L-erythro-6,7-dihydrobiopterin + H2O. This chain is Putative pterin-4-alpha-carbinolamine dehydratase, found in Rubrobacter xylanophilus (strain DSM 9941 / JCM 11954 / NBRC 16129 / PRD-1).